The following is a 357-amino-acid chain: DNA replication and repair protein RecF (357 aa).

An ATP-binding site is contributed by 30-37; it reads GANGSGKT.

The protein belongs to the RecF family.

The protein resides in the cytoplasm. Functionally, the RecF protein is involved in DNA metabolism; it is required for DNA replication and normal SOS inducibility. RecF binds preferentially to single-stranded, linear DNA. It also seems to bind ATP. The protein is DNA replication and repair protein RecF of Klebsiella pneumoniae subsp. pneumoniae (strain ATCC 700721 / MGH 78578).